The following is a 521-amino-acid chain: NADH-quinone oxidoreductase subunit N (521 aa).

The next 14 helical transmembrane spans lie at 15 to 35 (LAPELILAAMFLILIVTDLIL), 43 to 63 (IIGWLSLAGLLLSLAAVIWRM), 98 to 118 (LLKIIFLIGTSLVVLLGLGST), 128 to 148 (AEFYYLLLPAAAGAMIMASSG), 150 to 170 (LVTLYIGLELLSITTYVLVGL), 185 to 205 (VVTGGIASAFVLFGMSYLYGV), 227 to 247 (ALVYVGFFFLIAGFGIKIAAA), 261 to 281 (PTPVSAFLAVIAKGAALAAVF), 303 to 323 (VFFALLVIAAAAMIAGTVSAL), 331 to 351 (LLALSGVANAGYLLVPIAISV), 363 to 383 (VFYLVAYLLMNVGAFAVVTVI), 406 to 426 (AAAMLIFILSFSGLPVTAGFF), 442 to 462 (WLVAIMVVSTVISYYFYFGII), and 485 to 505 (TVIWICAAATVALGVLPGPLM).

It belongs to the complex I subunit 2 family. In terms of assembly, NDH-1 is composed of 14 different subunits. Subunits NuoA, H, J, K, L, M, N constitute the membrane sector of the complex.

It is found in the cell membrane. It catalyses the reaction a quinone + NADH + 5 H(+)(in) = a quinol + NAD(+) + 4 H(+)(out). Its function is as follows. NDH-1 shuttles electrons from NADH, via FMN and iron-sulfur (Fe-S) centers, to quinones in the respiratory chain. The immediate electron acceptor for the enzyme in this species is believed to be a menaquinone. Couples the redox reaction to proton translocation (for every two electrons transferred, four hydrogen ions are translocated across the cytoplasmic membrane), and thus conserves the redox energy in a proton gradient. This Paenibacillus sp. (strain JDR-2) protein is NADH-quinone oxidoreductase subunit N.